Reading from the N-terminus, the 289-residue chain is MATADPFDSALDLLRRLNPKHTAEHLNNLITLAPDLTEDLLSSVDQPLTVKRCKQTGRDYLLCDYNRDGDSYRSPWSNQFDPPLEGGNQGGSGGDGEGDGGEGGAAGSIMPGERVRKMEIKANEAFDVYRELYYEGGVSSVYFWNLDDGFAGVVLLKKSSPTNPSSSGVWDSIHVFEASERGRTSNYRLTSTVILSLATKGNALGEVDLSGNMTRQVEQDLPVENDESHIANIGRLVEDMELKMRNLLQEVYFGKAKDVVGDLRSVGSLSEGQRDRDAQMEIIGSMRKA.

The tract at residues 73 to 110 (RSPWSNQFDPPLEGGNQGGSGGDGEGDGGEGGAAGSIM) is disordered. Over residues 87-106 (GNQGGSGGDGEGDGGEGGAA) the composition is skewed to gly residues.

Belongs to the F-actin-capping protein beta subunit family. As to quaternary structure, component of the F-actin capping complex, composed of a heterodimer of an alpha and a beta subunit.

The protein resides in the cytoplasm. Its subcellular location is the cytoskeleton. The protein localises to the actin patch. F-actin-capping proteins bind in a Ca(2+)-independent manner to the fast growing ends of actin filaments (barbed end) thereby blocking the exchange of subunits at these ends. Unlike other capping proteins (such as gelsolin and severin), these proteins do not sever actin filaments. The chain is F-actin-capping protein subunit beta (fac-2) from Neurospora crassa (strain ATCC 24698 / 74-OR23-1A / CBS 708.71 / DSM 1257 / FGSC 987).